Here is a 216-residue protein sequence, read N- to C-terminus: Endoplasmic reticulum vesicle protein 25 (216 aa).

Residues 1–20 (MASLKSLLSGFLLLAGAAQA) form the signal peptide. Topologically, residues 21–185 (LKFDLEATSS…TNESTNNRVK (165 aa)) are lumenal. One can recognise a GOLD domain in the interval 36-126 (RRCIRNFVNK…RRHVELDIDI (91 aa)). Residues 186–206 (WFGMATTFLLIALWGWQIMYL) form a helical membrane-spanning segment. At 207-216 (RAYFRSKHLI) the chain is on the cytoplasmic side.

The protein belongs to the EMP24/GP25L family.

The protein localises to the endoplasmic reticulum membrane. It is found in the golgi apparatus membrane. Constituent of COPII-coated endoplasmic reticulum-derived transport vesicles. Required for efficient transport of a subset of secretory proteins to the Golgi. Facilitates retrograde transport from the Golgi to the endoplasmic reticulum. In Neurospora crassa (strain ATCC 24698 / 74-OR23-1A / CBS 708.71 / DSM 1257 / FGSC 987), this protein is Endoplasmic reticulum vesicle protein 25 (erv-1).